The chain runs to 781 residues: MPSDKPVFDIGSQAPERSDSESPSSRSIGSGTPAPVRKGLSKFKNSFLSRKNSSQIKSPSDYKSSAHEQRVNHTTDSMAHVPGNNSPLQTPQKSPPRQKHTAPATPIPVSASRHHKPHHSGLKNLLEKAMHPGHKSNANSPTSESPSKGFGSFINNHILHKNTSSHPSSPVNGKSSDIHKSQSYQHLKNSPPNSRTARKPVPRRANSASHNLGSTKSPNGNAKESLSRSAELPSKAKPMEINNGYRKKPSPLSPNSSIRNREGGNGSYFDGPLTASPTPSSPTGTPNSMSKSPSLSSLASTGASYRPGPSKPLVSRVRDNYANTSYESWPHSTEFDMFTYAVSGSLKLTPQGTGFDCINPANPFSPGYSGKSSMKSDDNVGSSANTAPNSPTSANSSEGNQGNGPTTYPIKPPTNISEIPRKLKSGFIPPYAKRVVPRLSAKYKLVDETKDMGSGATAVIRIVTLKNPKENEKNLRFAVKAYRRKADDETDGQYIAKLASEWLVQCRMEHPNVVKSYDLCIDSHIFPLYSDTWCAVMDFCPRGDLLSLIEDRHDRLGKKDFECMIKQILRGLNYIHSQGIAHRDIKPENILISEYGVLRITDFGACDVLCNPGDDITAVESKSMGIFGSDPYMAPEILTPGSYNAFFADMWSTAIVLHCLYFRTYPFRKASQNDQLYAKYCKAWREYNLICDVQNIRISKTLPYFKPVNDLPMHMQRLFFCLANPTAEQRITAQEALNLPFVQEIECCSVDDCTCTHDAPEECLEWANPPVQKLSTPHNHL.

2 disordered regions span residues 1–315 and 368–417; these read MPSD…PLVS and YSGK…TNIS. A compositionally biased stretch (low complexity) spans 21-31; it reads ESPSSRSIGSG. Polar residues predominate over residues 43–63; the sequence is FKNSFLSRKNSSQIKSPSDYK. Over residues 64–73 the composition is skewed to basic and acidic residues; that stretch reads SSAHEQRVNH. Polar residues predominate over residues 74-92; sequence TTDSMAHVPGNNSPLQTPQ. Phosphoserine is present on Ser94. Residues 112 to 121 are compositionally biased toward basic residues; the sequence is SRHHKPHHSG. Polar residues-rich tracts occupy residues 136 to 146, 161 to 195, and 206 to 228; these read SNANSPTSESP, KNTSSHPSSPVNGKSSDIHKSQSYQHLKNSPPNSR, and NSASHNLGSTKSPNGNAKESLSR. Residue Ser253 is modified to Phosphoserine. Over residues 272 to 304 the composition is skewed to low complexity; sequence PLTASPTPSSPTGTPNSMSKSPSLSSLASTGAS. Positions 379–406 are enriched in polar residues; that stretch reads NVGSSANTAPNSPTSANSSEGNQGNGPT. A Protein kinase domain is found at 432-742; the sequence is AKRVVPRLSA…AQEALNLPFV (311 aa). Residues 452 to 460 and Lys480 each bind ATP; that span reads MGSGATAVI. Asp584 functions as the Proton acceptor in the catalytic mechanism.

It belongs to the protein kinase superfamily. Ser/Thr protein kinase family.

Its subcellular location is the cytoplasm. It carries out the reaction L-seryl-[protein] + ATP = O-phospho-L-seryl-[protein] + ADP + H(+). The catalysed reaction is L-threonyl-[protein] + ATP = O-phospho-L-threonyl-[protein] + ADP + H(+). The polypeptide is Probable serine/threonine-protein kinase C70.05c (Schizosaccharomyces pombe (strain 972 / ATCC 24843) (Fission yeast)).